The following is an 83-amino-acid chain: Cytochrome c oxidase subunit 7A2, mitochondrial (83 aa).

The transit peptide at 1 to 23 (MLRNVLALRQIAQRTISTTSRRH) directs the protein to the mitochondrion. Residues 24–48 (FENKVPEKQKLFQEDNGMPVHLKGG) are Mitochondrial matrix-facing. Position 33 is an N6-acetyllysine (Lys-33). The chain crosses the membrane as a helical span at residues 49–77 (TSDALLYRATMLLTVGGTAYAIYMLAMAA). Over 78–83 (FPKKQN) the chain is Mitochondrial intermembrane.

It belongs to the cytochrome c oxidase VIIa family. As to quaternary structure, component of the cytochrome c oxidase (complex IV, CIV), a multisubunit enzyme composed of 14 subunits. The complex is composed of a catalytic core of 3 subunits MT-CO1, MT-CO2 and MT-CO3, encoded in the mitochondrial DNA, and 11 supernumerary subunits COX4I, COX5A, COX5B, COX6A, COX6B, COX6C, COX7A, COX7B, COX7C, COX8 and NDUFA4, which are encoded in the nuclear genome. The complex exists as a monomer or a dimer and forms supercomplexes (SCs) in the inner mitochondrial membrane with NADH-ubiquinone oxidoreductase (complex I, CI) and ubiquinol-cytochrome c oxidoreductase (cytochrome b-c1 complex, complex III, CIII), resulting in different assemblies (supercomplex SCI(1)III(2)IV(1) and megacomplex MCI(2)III(2)IV(2)). Interacts with PET100.

The protein localises to the mitochondrion inner membrane. It participates in energy metabolism; oxidative phosphorylation. Functionally, component of the cytochrome c oxidase, the last enzyme in the mitochondrial electron transport chain which drives oxidative phosphorylation. The respiratory chain contains 3 multisubunit complexes succinate dehydrogenase (complex II, CII), ubiquinol-cytochrome c oxidoreductase (cytochrome b-c1 complex, complex III, CIII) and cytochrome c oxidase (complex IV, CIV), that cooperate to transfer electrons derived from NADH and succinate to molecular oxygen, creating an electrochemical gradient over the inner membrane that drives transmembrane transport and the ATP synthase. Cytochrome c oxidase is the component of the respiratory chain that catalyzes the reduction of oxygen to water. Electrons originating from reduced cytochrome c in the intermembrane space (IMS) are transferred via the dinuclear copper A center (CU(A)) of subunit 2 and heme A of subunit 1 to the active site in subunit 1, a binuclear center (BNC) formed by heme A3 and copper B (CU(B)). The BNC reduces molecular oxygen to 2 water molecules using 4 electrons from cytochrome c in the IMS and 4 protons from the mitochondrial matrix. The sequence is that of Cytochrome c oxidase subunit 7A2, mitochondrial (Cox7a2) from Rattus norvegicus (Rat).